The sequence spans 490 residues: Cobyric acid synthase (490 aa).

The GATase cobBQ-type domain occupies 251–444 (GLTIAVIHLP…LHGIFANDAF (194 aa)). C329 (nucleophile) is an active-site residue. H436 is a catalytic residue.

It belongs to the CobB/CobQ family. CobQ subfamily.

The protein operates within cofactor biosynthesis; adenosylcobalamin biosynthesis. Catalyzes amidations at positions B, D, E, and G on adenosylcobyrinic A,C-diamide. NH(2) groups are provided by glutamine, and one molecule of ATP is hydrogenolyzed for each amidation. This Roseiflexus castenholzii (strain DSM 13941 / HLO8) protein is Cobyric acid synthase.